Here is a 195-residue protein sequence, read N- to C-terminus: Guanylate kinase (195 aa).

One can recognise a Guanylate kinase-like domain in the interval 10–189 (GRLIVFSAPS…TVDAVATRIA (180 aa)). 17–24 (APSGTGKS) is an ATP binding site.

This sequence belongs to the guanylate kinase family.

Its subcellular location is the cytoplasm. The enzyme catalyses GMP + ATP = GDP + ADP. Its function is as follows. Essential for recycling GMP and indirectly, cGMP. The chain is Guanylate kinase from Chlorobaculum tepidum (strain ATCC 49652 / DSM 12025 / NBRC 103806 / TLS) (Chlorobium tepidum).